A 119-amino-acid polypeptide reads, in one-letter code: uncharacterized protein (119 aa).

Residues 74 to 91 (LSVHFLLNVISAILSMLI) traverse the membrane as a helical segment.

It localises to the membrane. This is an uncharacterized protein from Schizosaccharomyces pombe (strain 972 / ATCC 24843) (Fission yeast).